A 156-amino-acid chain; its full sequence is Small ribosomal subunit protein uS7 (156 aa).

The protein belongs to the universal ribosomal protein uS7 family. As to quaternary structure, part of the 30S ribosomal subunit. Contacts proteins S9 and S11.

Functionally, one of the primary rRNA binding proteins, it binds directly to 16S rRNA where it nucleates assembly of the head domain of the 30S subunit. Is located at the subunit interface close to the decoding center, probably blocks exit of the E-site tRNA. This Wigglesworthia glossinidia brevipalpis protein is Small ribosomal subunit protein uS7.